We begin with the raw amino-acid sequence, 434 residues long: Putative G3BP-like protein (434 aa).

An NTF2 domain is found at 18-134 (IGWMFVQEYY…YFVLNDIFRF (117 aa)). 2 disordered regions span residues 141 to 180 (EEEE…EGHY) and 274 to 308 (VKSQ…PYTQ). S145 is subject to Phosphoserine. A compositionally biased stretch (basic and acidic residues) spans 148 to 157 (AVEKEKKDVA). A compositionally biased stretch (low complexity) spans 276 to 291 (SQASVSSTASTTGQTV). Residues 296–308 (ADQTQQPTAPYTQ) show a composition bias toward polar residues. The RRM domain maps to 315–386 (TSVFVKNIPP…ATLNIEERRR (72 aa)). Positions 390 to 434 (GKFNKSGDKKSNDNYNGMKRNFRKGNRGAFDGRSKEVTTSKKQNN) are disordered. Basic and acidic residues predominate over residues 419–428 (FDGRSKEVTT).

Its function is as follows. Probable scaffold protein that may be involved in mRNA transport. The polypeptide is Putative G3BP-like protein (nxt3) (Schizosaccharomyces pombe (strain 972 / ATCC 24843) (Fission yeast)).